A 974-amino-acid polypeptide reads, in one-letter code: RING finger protein nhl-1 (974 aa).

Residues 1-29 form a disordered region; sequence MSSSPQNEAEAREKMRELMSRPPSSRPAD. Residues 9-19 are compositionally biased toward basic and acidic residues; it reads AEAREKMRELM. The RING-type zinc finger occupies 43-84; it reads CPICLDRYKQPKLLPCQHTFCYPCLESCADTLHRNLKCPECR. Disordered regions lie at residues 360–395 and 416–548; these read VKSD…IRYR and SLLT…DFPV. The segment covering 416 to 431 has biased composition (polar residues); it reads SLLTTSVTADSSSRTS. Residues 437–446 are compositionally biased toward basic and acidic residues; sequence RVTRSVEPTK. Residues 447-465 show a composition bias toward polar residues; sequence SRPTSLIVPNTETPRTVSP. Positions 488 to 501 are enriched in pro residues; it reads APLPQLPIRKPPLP. The span at 511–528 shows a compositional bias: basic and acidic residues; sequence LNEKVETIRRAHQQRQDA. Residues 529–538 are compositionally biased toward low complexity; the sequence is SRAASRAVSS. 6 NHL repeats span residues 699 to 742, 746 to 788, 792 to 835, 839 to 883, 887 to 930, and 934 to 974; these read RAVF…FDKD, VRQF…FGLE, LFSF…FDKN, IAKF…FDPH, LFSF…FDAQ, and VSSF…IQIF.

As to quaternary structure, interacts with ubc-13.

The sequence is that of RING finger protein nhl-1 from Caenorhabditis elegans.